The sequence spans 416 residues: E3 ubiquitin-protein ligase RNFT1 (416 aa).

A compositionally biased stretch (polar residues) spans 27 to 45 (QSSSGHTHHQPGSNDSPSV). 2 disordered regions span residues 27 to 50 (QSSSGHTHHQPGSNDSPSVCMSLP) and 63 to 116 (GDVT…ADSR). A compositionally biased stretch (basic residues) spans 77 to 86 (GARSSSRRVR). 6 helical membrane-spanning segments follow: residues 146–166 (LVVQHITGISVGIGLLTTFLY), 184–204 (LQCLWILVFLLFSSLLLYYTF), 214–234 (VFMNPSLGPLHFFDALWVVGI), 237–257 (FIGKFFFMGLKCIILLVPSFV), 265–287 (YWYMALEEVAQCYCMLVSTPVWF), and 302–322 (WHFGILLALLYLILKLLIIFG). Residues 349–400 (CSEVDGMCAICQAEFIKPIVLVCQHVFCEECISLWFNKEKTCPLCRTVISNQ) form a required for ubiquitin ligase activity and for protection against ER stress-induced cell death region. The RING-type zinc-finger motif lies at 356–394 (CAICQAEFIKPIVLVCQHVFCEECISLWFNKEKTCPLCR).

Its subcellular location is the endoplasmic reticulum membrane. It catalyses the reaction S-ubiquitinyl-[E2 ubiquitin-conjugating enzyme]-L-cysteine + [acceptor protein]-L-lysine = [E2 ubiquitin-conjugating enzyme]-L-cysteine + N(6)-ubiquitinyl-[acceptor protein]-L-lysine.. Its pathway is protein modification; protein ubiquitination. Its function is as follows. E3 ubiquitin-protein ligase that acts in the endoplasmic reticulum (ER)-associated degradation (ERAD) pathway, which targets misfolded proteins that accumulate in the endoplasmic reticulum (ER) for ubiquitination and subsequent proteasome-mediated degradation. Protects cells from ER stress-induced apoptosis. The sequence is that of E3 ubiquitin-protein ligase RNFT1 (rnft1) from Xenopus tropicalis (Western clawed frog).